The sequence spans 517 residues: ATP synthase subunit alpha 1 (517 aa).

176 to 183 contacts ATP; that stretch reads GDRQTGKT.

This sequence belongs to the ATPase alpha/beta chains family. In terms of assembly, F-type ATPases have 2 components, CF(1) - the catalytic core - and CF(0) - the membrane proton channel. CF(1) has five subunits: alpha(3), beta(3), gamma(1), delta(1), epsilon(1). CF(0) has three main subunits: a(1), b(2) and c(9-12). The alpha and beta chains form an alternating ring which encloses part of the gamma chain. CF(1) is attached to CF(0) by a central stalk formed by the gamma and epsilon chains, while a peripheral stalk is formed by the delta and b chains.

The protein resides in the cell inner membrane. The catalysed reaction is ATP + H2O + 4 H(+)(in) = ADP + phosphate + 5 H(+)(out). Its function is as follows. Produces ATP from ADP in the presence of a proton gradient across the membrane. The alpha chain is a regulatory subunit. The polypeptide is ATP synthase subunit alpha 1 (Shewanella frigidimarina (strain NCIMB 400)).